A 412-amino-acid polypeptide reads, in one-letter code: Na(+)/H(+) antiporter NhaA 1 (412 aa).

Transmembrane regions (helical) follow at residues 34–54 (VGGM…NSPA), 75–95 (LTIG…VAGL), 114–134 (LPVV…FAIG), 142–162 (AAWA…LSLT), 183–203 (LGAI…LALL), 234–254 (WIAV…LGLL), 282–302 (LIVP…EALV), 309–329 (VAIA…FGSS), 349–369 (LSAL…IAEL), and 379–399 (AKAA…VMLL).

It belongs to the NhaA Na(+)/H(+) (TC 2.A.33) antiporter family.

It localises to the cell membrane. It catalyses the reaction Na(+)(in) + 2 H(+)(out) = Na(+)(out) + 2 H(+)(in). Na(+)/H(+) antiporter that extrudes sodium in exchange for external protons. The chain is Na(+)/H(+) antiporter NhaA 1 from Saccharopolyspora erythraea (strain ATCC 11635 / DSM 40517 / JCM 4748 / NBRC 13426 / NCIMB 8594 / NRRL 2338).